The following is a 244-amino-acid chain: 3-deoxy-manno-octulosonate cytidylyltransferase (244 aa).

This sequence belongs to the KdsB family.

Its subcellular location is the cytoplasm. The enzyme catalyses 3-deoxy-alpha-D-manno-oct-2-ulosonate + CTP = CMP-3-deoxy-beta-D-manno-octulosonate + diphosphate. Its pathway is nucleotide-sugar biosynthesis; CMP-3-deoxy-D-manno-octulosonate biosynthesis; CMP-3-deoxy-D-manno-octulosonate from 3-deoxy-D-manno-octulosonate and CTP: step 1/1. The protein operates within bacterial outer membrane biogenesis; lipopolysaccharide biosynthesis. Activates KDO (a required 8-carbon sugar) for incorporation into bacterial lipopolysaccharide in Gram-negative bacteria. The sequence is that of 3-deoxy-manno-octulosonate cytidylyltransferase from Synechococcus elongatus (strain ATCC 33912 / PCC 7942 / FACHB-805) (Anacystis nidulans R2).